The sequence spans 385 residues: MTMKRPTRIAMVAGELSGDLLGAGVIRELKQHLTNVEFMGVGGPQMLKEGFHSLIDISELSVMGISDVLRRYPQLYLIRERLLREWTINPPDVFIGIDYPDFNLSVEARLKKQHIKTIHLVSPKVWAWRQKRVHLIKKAVDLVLTLFPFEEAFYRQHGVSAQFIGHPLADLIEINPSCSTLRKKYNYHSDDTILAVLPGSRVGEIKYMGPLFLEVMQRIAVERPHVHFIVPIACQDLYPVFFKQLHAEYGHLKIQIIQGNAREAMAISDVVLTKSGTATLEAMLLKRPMVVAFKWGILTHAIIAPQVKVPYIALPNLLAGKKLIPEFVQEKANVDSITESVLNLLDSSNQNELIKQFTDIHCTLRQNANEKAALSILRILGTSLT.

The protein belongs to the LpxB family.

It carries out the reaction a lipid X + a UDP-2-N,3-O-bis[(3R)-3-hydroxyacyl]-alpha-D-glucosamine = a lipid A disaccharide + UDP + H(+). It functions in the pathway bacterial outer membrane biogenesis; LPS lipid A biosynthesis. Condensation of UDP-2,3-diacylglucosamine and 2,3-diacylglucosamine-1-phosphate to form lipid A disaccharide, a precursor of lipid A, a phosphorylated glycolipid that anchors the lipopolysaccharide to the outer membrane of the cell. This chain is Lipid-A-disaccharide synthase 2, found in Legionella pneumophila subsp. pneumophila (strain Philadelphia 1 / ATCC 33152 / DSM 7513).